Consider the following 303-residue polypeptide: MIRHFLALNQFTKEELDGLFTLSRELKDKQKQGVPHRLLEGKSVALIFEKSSTRTRVSFEVGVAQLGAHPLFISSATSQMGRGEPIKDTARVMARYCDGVMIRTYGQEIVEEFARYSSVPVINGLTDLFHPCQIMADLFTVIEYKGGYQGLKFAWVGDGNNMANTWIEAAAILGFDLALACPTGYEPDRQVWDWAQQRATSSITITEDPEEAVRDADVVNTDVWASMGQEQEQKEREAAFQGYCLDDALVALARPDCMVLHCLPAHRGEEITDSVIEGPRSAVWDEAENRLHIQKAIMASLMK.

Residues 52-55 (STRT), Gln79, Arg103, and 130-133 (HPCQ) each bind carbamoyl phosphate. L-ornithine is bound by residues Asn161, Asp222, and 226–227 (SM). Residues 262–263 (CL) and Arg290 contribute to the carbamoyl phosphate site.

Belongs to the aspartate/ornithine carbamoyltransferase superfamily. OTCase family.

The protein resides in the cytoplasm. It catalyses the reaction carbamoyl phosphate + L-ornithine = L-citrulline + phosphate + H(+). It functions in the pathway amino-acid biosynthesis; L-arginine biosynthesis; L-arginine from L-ornithine and carbamoyl phosphate: step 1/3. Functionally, reversibly catalyzes the transfer of the carbamoyl group from carbamoyl phosphate (CP) to the N(epsilon) atom of ornithine (ORN) to produce L-citrulline. This Geobacter sulfurreducens (strain ATCC 51573 / DSM 12127 / PCA) protein is Ornithine carbamoyltransferase.